A 311-amino-acid polypeptide reads, in one-letter code: Pyrimidine-specific ribonucleoside hydrolase RihA (311 aa).

His240 is an active-site residue.

Belongs to the IUNH family. RihA subfamily.

In terms of biological role, hydrolyzes with equal efficiency cytidine or uridine to ribose and cytosine or uracil, respectively. This chain is Pyrimidine-specific ribonucleoside hydrolase RihA, found in Escherichia coli O7:K1 (strain IAI39 / ExPEC).